Reading from the N-terminus, the 159-residue chain is Putative 4-hydroxy-4-methyl-2-oxoglutarate aldolase (159 aa).

Substrate is bound by residues 75–78 (GDQL) and R97. An a divalent metal cation-binding site is contributed by D98.

Belongs to the class II aldolase/RraA-like family. As to quaternary structure, homotrimer. Requires a divalent metal cation as cofactor.

It carries out the reaction 4-hydroxy-4-methyl-2-oxoglutarate = 2 pyruvate. The catalysed reaction is oxaloacetate + H(+) = pyruvate + CO2. Its function is as follows. Catalyzes the aldol cleavage of 4-hydroxy-4-methyl-2-oxoglutarate (HMG) into 2 molecules of pyruvate. Also contains a secondary oxaloacetate (OAA) decarboxylase activity due to the common pyruvate enolate transition state formed following C-C bond cleavage in the retro-aldol and decarboxylation reactions. In Laribacter hongkongensis (strain HLHK9), this protein is Putative 4-hydroxy-4-methyl-2-oxoglutarate aldolase.